Consider the following 68-residue polypeptide: Galectin-10 (68 aa).

One can recognise a Galectin domain in the interval 1 to 68; sequence EPYLQVDFHT…LSISVLPDKY (68 aa).

As to quaternary structure, interacts with CEL.

The protein resides in the cytoplasm. Its subcellular location is the cytosol. The protein localises to the cytoplasmic granule. Its function is as follows. Regulates immune responses through the recognition of cell-surface glycans. Essential for the anergy and suppressive function of CD25-positive regulatory T-cells (Treg). This chain is Galectin-10 (CLC), found in Pongo pygmaeus (Bornean orangutan).